The chain runs to 469 residues: UDP-N-acetylmuramate--L-alanine ligase (469 aa).

119 to 125 (GTHGKTT) contacts ATP.

This sequence belongs to the MurCDEF family.

It is found in the cytoplasm. It catalyses the reaction UDP-N-acetyl-alpha-D-muramate + L-alanine + ATP = UDP-N-acetyl-alpha-D-muramoyl-L-alanine + ADP + phosphate + H(+). Its pathway is cell wall biogenesis; peptidoglycan biosynthesis. Functionally, cell wall formation. In Vesicomyosocius okutanii subsp. Calyptogena okutanii (strain HA), this protein is UDP-N-acetylmuramate--L-alanine ligase.